Consider the following 368-residue polypeptide: Chaperone protein DnaJ (368 aa).

A J domain is found at 5–70; the sequence is DYYQVLGVPR…KKRKLYDTHG (66 aa). Residues 124 to 201 form a CR-type zinc finger; the sequence is GVERQIQIPT…CNGAGRVEDH (78 aa). The Zn(2+) site is built by Cys-137, Cys-140, Cys-153, Cys-156, Cys-175, Cys-178, Cys-189, and Cys-192. 4 CXXCXGXG motif repeats span residues 137–144, 153–160, 175–182, and 189–196; these read CTHCNGSG, CGTCRGSG, CPHCGGRG, and CKVCNGAG.

The protein belongs to the DnaJ family. In terms of assembly, homodimer. Zn(2+) serves as cofactor.

It is found in the cytoplasm. Its function is as follows. Participates actively in the response to hyperosmotic and heat shock by preventing the aggregation of stress-denatured proteins and by disaggregating proteins, also in an autonomous, DnaK-independent fashion. Unfolded proteins bind initially to DnaJ; upon interaction with the DnaJ-bound protein, DnaK hydrolyzes its bound ATP, resulting in the formation of a stable complex. GrpE releases ADP from DnaK; ATP binding to DnaK triggers the release of the substrate protein, thus completing the reaction cycle. Several rounds of ATP-dependent interactions between DnaJ, DnaK and GrpE are required for fully efficient folding. Also involved, together with DnaK and GrpE, in the DNA replication of plasmids through activation of initiation proteins. This Xylella fastidiosa (strain M12) protein is Chaperone protein DnaJ.